We begin with the raw amino-acid sequence, 122 residues long: MRIALIAHDKKKDLMIQFTKDHEDYLSNHTLYATGTTGTRIMEHTKLKVNLKKSGPLGGDQEIGSMIANGKLDLVFFFRDPLTAQPHEPDVSALLRLCDVYDVPLATNNAAADLFIKHLKGK.

Residues 1 to 122 (MRIALIAHDK…DLFIKHLKGK (122 aa)) form the MGS-like domain. Substrate contacts are provided by residues H8, K12, 34–37 (TGTT), and 54–55 (SG). The active-site Proton donor/acceptor is the D60. H87 provides a ligand contact to substrate.

Belongs to the methylglyoxal synthase family.

The enzyme catalyses dihydroxyacetone phosphate = methylglyoxal + phosphate. Functionally, catalyzes the formation of methylglyoxal from dihydroxyacetone phosphate. This chain is Methylglyoxal synthase, found in Acholeplasma laidlawii (strain PG-8A).